The primary structure comprises 202 residues: ATP-dependent Clp protease proteolytic subunit (202 aa).

The active-site Nucleophile is Ser-106. Residue His-131 is part of the active site.

This sequence belongs to the peptidase S14 family. In terms of assembly, fourteen ClpP subunits assemble into 2 heptameric rings which stack back to back to give a disk-like structure with a central cavity, resembling the structure of eukaryotic proteasomes.

It localises to the cytoplasm. It carries out the reaction Hydrolysis of proteins to small peptides in the presence of ATP and magnesium. alpha-casein is the usual test substrate. In the absence of ATP, only oligopeptides shorter than five residues are hydrolyzed (such as succinyl-Leu-Tyr-|-NHMec, and Leu-Tyr-Leu-|-Tyr-Trp, in which cleavage of the -Tyr-|-Leu- and -Tyr-|-Trp bonds also occurs).. Cleaves peptides in various proteins in a process that requires ATP hydrolysis. Has a chymotrypsin-like activity. Plays a major role in the degradation of misfolded proteins. The sequence is that of ATP-dependent Clp protease proteolytic subunit from Shewanella sp. (strain W3-18-1).